The following is a 173-amino-acid chain: Flagellar assembly factor FliW (173 aa).

Residues 152 to 173 are disordered; it reads STTVRRKASPPAAGEDKGDVQE.

This sequence belongs to the FliW family. Interacts with translational regulator CsrA and flagellin(s).

The protein localises to the cytoplasm. Acts as an anti-CsrA protein, binds CsrA and prevents it from repressing translation of its target genes, one of which is flagellin. Binds to flagellin and participates in the assembly of the flagellum. The sequence is that of Flagellar assembly factor FliW from Nitratidesulfovibrio vulgaris (strain ATCC 29579 / DSM 644 / CCUG 34227 / NCIMB 8303 / VKM B-1760 / Hildenborough) (Desulfovibrio vulgaris).